A 349-amino-acid polypeptide reads, in one-letter code: 1-acylglycerol-3-phosphate O-acyltransferase ABHD5 (349 aa).

N-acetylalanine is present on alanine 2. Positions 77–184 (PLVLLHGFGG…LVEPWGFPER (108 aa)) constitute an AB hydrolase-1 domain. Position 122 is a phosphoserine (serine 122). The HXXXXD motif signature appears at 327–332 (HYVYAD).

Belongs to the peptidase S33 family. ABHD4/ABHD5 subfamily. Interacts with ADRP, PLIN and PNPLA2. Interacts with PLIN5; promotes interaction with PNPLA2.

The protein localises to the cytoplasm. The protein resides in the lipid droplet. It carries out the reaction a 1-acyl-sn-glycero-3-phosphate + an acyl-CoA = a 1,2-diacyl-sn-glycero-3-phosphate + CoA. It catalyses the reaction 1-(9Z-octadecenoyl)-sn-glycero-3-phosphate + (9Z)-octadecenoyl-CoA = 1,2-di-(9Z-octadecenoyl)-sn-glycero-3-phosphate + CoA. The catalysed reaction is 1-(9Z-octadecenoyl)-sn-glycero-3-phosphate + hexadecanoyl-CoA = 1-(9Z)-octadecenoyl-2-hexadecanoyl-sn-glycero-3-phosphate + CoA. The enzyme catalyses 1-(9Z-octadecenoyl)-sn-glycero-3-phosphate + octadecanoyl-CoA = 1-(9Z-octadecenoyl)-2-octadecanoyl-sn-glycero-3-phosphate + CoA. It carries out the reaction 1-(9Z-octadecenoyl)-sn-glycero-3-phosphate + (5Z,8Z,11Z,14Z)-eicosatetraenoyl-CoA = 1-(9Z)-octadecenoyl-2-(5Z,8Z,11Z,14Z)-eicosatetraenoyl-sn-glycero-3-phosphate + CoA. It catalyses the reaction eicosanoyl-CoA + 1-(9Z-octadecenoyl)-sn-glycero-3-phosphate = 1-(9Z)-octadecenoyl-2-eicosanoyl-sn-glycero-3-phosphate + CoA. The catalysed reaction is 1-hexadecanoyl-sn-glycero-3-phosphate + (9Z)-octadecenoyl-CoA = 1-hexadecanoyl-2-(9Z-octadecenoyl)-sn-glycero-3-phosphate + CoA. The enzyme catalyses 1-octadecanoyl-sn-glycero-3-phosphate + (9Z)-octadecenoyl-CoA = 1-octadecanoyl-2-(9Z-octadecenoyl)-sn-glycero-3-phosphate + CoA. It carries out the reaction 1-(5Z,8Z,11Z,14Z-eicosatetraenoyl)-sn-glycero-3-phosphate + (9Z)-octadecenoyl-CoA = 1-(5Z,8Z,11Z,14Z)-eicosatetraenoyl-2-(9Z)-octadecenoyl-sn-glycero-3-phosphate + CoA. With respect to regulation, acyltransferase activity is inhibited by detergents such as Triton X-100 and 3-[(3-cholamidopropyl)dimethylammonio]-1-propanesulfonate (CHAPS). Acyltransferase activity is inhibited by the presence of magnesium and calcium. In terms of biological role, coenzyme A-dependent lysophosphatidic acid acyltransferase that catalyzes the transfer of an acyl group on a lysophosphatidic acid. Functions preferentially with 1-oleoyl-lysophosphatidic acid followed by 1-palmitoyl-lysophosphatidic acid, 1-stearoyl-lysophosphatidic acid and 1-arachidonoyl-lysophosphatidic acid as lipid acceptor. Functions preferentially with arachidonoyl-CoA followed by oleoyl-CoA as acyl group donors. Functions in phosphatidic acid biosynthesis. May regulate the cellular storage of triacylglycerol through activation of the phospholipase PNPLA2. Involved in keratinocyte differentiation. Regulates lipid droplet fusion. In Pongo abelii (Sumatran orangutan), this protein is 1-acylglycerol-3-phosphate O-acyltransferase ABHD5.